Consider the following 443-residue polypeptide: Mitochondrial distribution and morphology protein 10 (443 aa).

Belongs to the MDM10 family. In terms of assembly, component of the ER-mitochondria encounter structure (ERMES) or MDM complex, composed of MMM1, MDM10, MDM12 and MDM34. Associates with the mitochondrial outer membrane sorting assembly machinery SAM(core) complex.

It localises to the mitochondrion outer membrane. Functionally, component of the ERMES/MDM complex, which serves as a molecular tether to connect the endoplasmic reticulum and mitochondria. Components of this complex are involved in the control of mitochondrial shape and protein biogenesis and may function in phospholipid exchange. MDM10 is involved in the late assembly steps of the general translocase of the mitochondrial outer membrane (TOM complex). Functions in the TOM40-specific route of the assembly of outer membrane beta-barrel proteins, including the association of TOM40 with the receptor TOM22 and small TOM proteins. Can associate with the SAM(core) complex as well as the MDM12-MMM1 complex, both involved in late steps of the major beta-barrel assembly pathway, that is responsible for biogenesis of all outer membrane beta-barrel proteins. May act as a switch that shuttles between both complexes and channels precursor proteins into the TOM40-specific pathway. Plays a role in mitochondrial morphology and in the inheritance of mitochondria. This Pyricularia oryzae (strain 70-15 / ATCC MYA-4617 / FGSC 8958) (Rice blast fungus) protein is Mitochondrial distribution and morphology protein 10.